Reading from the N-terminus, the 461-residue chain is Cysteine--tRNA ligase (461 aa).

C27 serves as a coordination point for Zn(2+). The short motif at 29-39 (ITVYDYCHIGH) is the 'HIGH' region element. Residues C208, H233, and E237 each coordinate Zn(2+). The 'KMSKS' region signature appears at 265–269 (KMSKS). An ATP-binding site is contributed by K268.

The protein belongs to the class-I aminoacyl-tRNA synthetase family. As to quaternary structure, monomer. The cofactor is Zn(2+).

Its subcellular location is the cytoplasm. The catalysed reaction is tRNA(Cys) + L-cysteine + ATP = L-cysteinyl-tRNA(Cys) + AMP + diphosphate. This Chromohalobacter salexigens (strain ATCC BAA-138 / DSM 3043 / CIP 106854 / NCIMB 13768 / 1H11) protein is Cysteine--tRNA ligase.